The sequence spans 347 residues: Protein NDL3 (347 aa).

It belongs to the NDRG family. As to quaternary structure, interacts with the heterodimers formed by GB1 and GG1, or GB1 and GG2. Interacts with RGS1.

Its subcellular location is the cytoplasm. In terms of biological role, involved in a signaling pathway that modulates root auxin transport and auxin gradients. Acts partially by positively regulating the auxin carrier PIN2 and AUX1. Acts, together with GB1 as positive regulator of meristem initiation and branching. GB1 and NDL3 positively regulate basipetal inflorescence auxin transport and modulate MAX2 expression in shoots, which regulates organ and lateral meristem formation by the establishment and maintenance of auxin gradients. The chain is Protein NDL3 from Arabidopsis thaliana (Mouse-ear cress).